Here is a 91-residue protein sequence, read N- to C-terminus: uncharacterized protein (91 aa).

3 helical membrane-spanning segments follow: residues 6-26 (AAAVFSITIPIISAILIINFF), 37-57 (MPVFFPLLLSPIGIILAFVSI), and 68-88 (IVLNAIMFPFPFFWFIGGALL).

The protein resides in the cell membrane. This is an uncharacterized protein from Bacillus subtilis (strain 168).